The sequence spans 233 residues: Large ribosomal subunit protein eL6z (233 aa).

Residues 175–195 (EFFEAEKEEKKEIPQEKKEDQ) are disordered.

This sequence belongs to the eukaryotic ribosomal protein eL6 family.

The polypeptide is Large ribosomal subunit protein eL6z (RPL6A) (Arabidopsis thaliana (Mouse-ear cress)).